The chain runs to 192 residues: RNA-free ribonuclease P (192 aa).

Belongs to the HARP family.

The enzyme catalyses Endonucleolytic cleavage of RNA, removing 5'-extranucleotides from tRNA precursor.. In terms of biological role, RNA-free RNase P that catalyzes the removal of the 5'-leader sequence from pre-tRNA to produce the mature 5'-terminus. The chain is RNA-free ribonuclease P from Alkalilimnicola ehrlichii (strain ATCC BAA-1101 / DSM 17681 / MLHE-1).